The sequence spans 499 residues: UDP-N-acetylmuramoylalanine--D-glutamate ligase (499 aa).

Residue 128 to 134 (GTNGKTT) coordinates ATP.

This sequence belongs to the MurCDEF family.

The protein resides in the cytoplasm. The catalysed reaction is UDP-N-acetyl-alpha-D-muramoyl-L-alanine + D-glutamate + ATP = UDP-N-acetyl-alpha-D-muramoyl-L-alanyl-D-glutamate + ADP + phosphate + H(+). Its pathway is cell wall biogenesis; peptidoglycan biosynthesis. In terms of biological role, cell wall formation. Catalyzes the addition of glutamate to the nucleotide precursor UDP-N-acetylmuramoyl-L-alanine (UMA). This Rhodococcus jostii (strain RHA1) protein is UDP-N-acetylmuramoylalanine--D-glutamate ligase.